The primary structure comprises 539 residues: Bifunctional purine biosynthesis protein PurH (539 aa).

In terms of domain architecture, MGS-like spans 8–159 (FPIPDLHRVR…KNYAYTGVVT (152 aa)).

It belongs to the PurH family.

It carries out the reaction (6R)-10-formyltetrahydrofolate + 5-amino-1-(5-phospho-beta-D-ribosyl)imidazole-4-carboxamide = 5-formamido-1-(5-phospho-D-ribosyl)imidazole-4-carboxamide + (6S)-5,6,7,8-tetrahydrofolate. It catalyses the reaction IMP + H2O = 5-formamido-1-(5-phospho-D-ribosyl)imidazole-4-carboxamide. It functions in the pathway purine metabolism; IMP biosynthesis via de novo pathway; 5-formamido-1-(5-phospho-D-ribosyl)imidazole-4-carboxamide from 5-amino-1-(5-phospho-D-ribosyl)imidazole-4-carboxamide (10-formyl THF route): step 1/1. The protein operates within purine metabolism; IMP biosynthesis via de novo pathway; IMP from 5-formamido-1-(5-phospho-D-ribosyl)imidazole-4-carboxamide: step 1/1. The protein is Bifunctional purine biosynthesis protein PurH of Bartonella tribocorum (strain CIP 105476 / IBS 506).